Here is a 482-residue protein sequence, read N- to C-terminus: MMETMPNWLMQRAFLTPDRTAIEMEEEKVTFMQLHEKVVSVCEHLTHVGVKRGQKVAVLMKNGMEMITVIHALSYVGAVAVLLNTRLSREELLWQMDDAEVICLVTDQDFEAKDIPVYSFAEVMNGPKEEASIQEEFSLKEAMTIIYTSGTTGKPKGVILTYGNHWASAVGSSFNLGLRDDDCWLACMPMFHVGGLSLLMKNIMYGMRILLVPKYDADFIHKALQTRGVTIISVVSKMLTDLLERLGEETYPPSLRCMLLGGGPAPKPLLEACVEKRIPVYQTYGMTETSSQICTLSADYMLMKVGSAGKPLFQCQLRIEKDGVVVPPFAEGEIVVKGPNVTGGYFNREDATRETIQNGWLHTGDLGYLDEEGFLYVLDRRSDLIISGGENIYPAQIEEVLLSHPMVAEAGVVGMTDDKWGQVPAAFVVKSGEITEEEILHFCEEKLAKYKVPKKAWFLEELPRNASKKLLRRELRQLVEEM.

The protein belongs to the ATP-dependent AMP-binding enzyme family. MenE subfamily.

It catalyses the reaction 2-succinylbenzoate + ATP + CoA = 2-succinylbenzoyl-CoA + AMP + diphosphate. The protein operates within quinol/quinone metabolism; 1,4-dihydroxy-2-naphthoate biosynthesis; 1,4-dihydroxy-2-naphthoate from chorismate: step 5/7. Its pathway is quinol/quinone metabolism; menaquinone biosynthesis. Its function is as follows. Converts 2-succinylbenzoate (OSB) to 2-succinylbenzoyl-CoA (OSB-CoA). This chain is 2-succinylbenzoate--CoA ligase, found in Bacillus cereus (strain ZK / E33L).